We begin with the raw amino-acid sequence, 341 residues long: 2-acylglycerol O-acyltransferase 3 (341 aa).

The next 2 membrane-spanning stretches (helical) occupy residues 29-49 (YVLTFLFMGPFFSLLVFVLLF) and 50-70 (TSLWPFSVFYLVWLYVDWDTP). N-linked (GlcNAc...) asparagine glycosylation occurs at N126. The helical transmembrane segment at 137 to 157 (LFPGLRPWLAVLAGLFYLPVY) threads the bilayer.

Belongs to the diacylglycerol acyltransferase family. Ubiquitinated. Ubiquitination leads to proteasomal degradation. In terms of tissue distribution, selectively expressed in the digestive system. Highly expressed in the ileum, and at lower level in jejunum, duodenum, colon, cecum and the rectum. Not expressed in the stomach and the esophagus and trachea. Expressed at very low level in liver.

The protein localises to the endoplasmic reticulum membrane. It localises to the cytoplasm. Its subcellular location is the perinuclear region. It carries out the reaction a 2-acylglycerol + an acyl-CoA = a 1,2-diacylglycerol + CoA. The enzyme catalyses an acyl-CoA + a 1,2-diacyl-sn-glycerol = a triacyl-sn-glycerol + CoA. The catalysed reaction is 2-(9Z-octadecenoyl)-glycerol + (9Z)-octadecenoyl-CoA = 1,2-di-(9Z-octadecenoyl)-sn-glycerol + CoA. It catalyses the reaction 2-(9Z-octadecenoyl)-glycerol + hexadecanoyl-CoA = 1-hexadecanoyl-2-(9Z-octadecenoyl)-sn-glycerol + CoA. It carries out the reaction 1,2-di-(9Z-octadecenoyl)-sn-glycerol + (9Z)-octadecenoyl-CoA = 1,2,3-tri-(9Z-octadecenoyl)-glycerol + CoA. The enzyme catalyses 1-hexadecanoyl-2-(9Z-octadecenoyl)-sn-glycerol + hexadecanoyl-CoA = 1,3-dihexadecanoyl-2-(9Z-octadecenoyl)glycerol + CoA. The catalysed reaction is all-trans-retinol + hexadecanoyl-CoA = all-trans-retinyl hexadecanoate + CoA. It catalyses the reaction 1-O-(9Z-octadecenyl)-glycerol + (9Z)-octadecenoyl-CoA = 1-O-(9Z-octadecyl)-3-(9Z-octadecenoyl)-glycerol + CoA. It carries out the reaction 1-O-(9Z-octadecyl)-3-(9Z-octadecenoyl)-glycerol + (9Z)-octadecenoyl-CoA = 1-O-(9Z-octadecenyl)-2,3-di-(9Z-octadecenoyl)glycerol + CoA. It participates in glycerolipid metabolism; triacylglycerol biosynthesis. In terms of biological role, catalyzes the formation of diacylglycerol from 2-monoacylglycerol and fatty acyl-CoA. Also able to catalyze the terminal step in triacylglycerol synthesis by using diacylglycerol and fatty acyl-CoA as substrates. Has a preference toward palmitoyl-CoA and oleoyl-CoA. May be involved in absorption of dietary fat in the small intestine by catalyzing the resynthesis of triacylglycerol in enterocytes. Also able to use 1-monoalkylglycerol (1-MAkG) as an acyl acceptor for the synthesis of monoalkyl-monoacylglycerol (MAMAG). This is 2-acylglycerol O-acyltransferase 3 from Homo sapiens (Human).